Reading from the N-terminus, the 156-residue chain is Small ribosomal subunit protein uS7 (156 aa).

The protein belongs to the universal ribosomal protein uS7 family. In terms of assembly, part of the 30S ribosomal subunit. Contacts proteins S9 and S11.

Functionally, one of the primary rRNA binding proteins, it binds directly to 16S rRNA where it nucleates assembly of the head domain of the 30S subunit. Is located at the subunit interface close to the decoding center, probably blocks exit of the E-site tRNA. This is Small ribosomal subunit protein uS7 from Histophilus somni (strain 129Pt) (Haemophilus somnus).